The following is a 481-amino-acid chain: Extracellular exo-alpha-(1-&gt;5)-L-arabinofuranosidase (481 aa).

The N-terminal stretch at 1–27 (MRRLTVRLFTAVLAALALLTMGTPAHA) is a signal peptide. The interval 37-336 (FTNPLAEKRA…KVYWNADGTP (300 aa)) is catalytic. D47 acts as the Proton acceptor in catalysis. Residue N186 participates in substrate binding. The active-site Proton donor is E223. Residues H287, R321, 363 to 366 (HWDF), D379, 457 to 460 (HYEN), and D475 contribute to the substrate site. The interval 349 to 479 (VRFSSYNYPD…ALDRQDATFY (131 aa)) is ABD.

The protein belongs to the glycosyl hydrolase 43 family.

It localises to the secreted. It catalyses the reaction Hydrolysis of terminal non-reducing alpha-L-arabinofuranoside residues in alpha-L-arabinosides.. It functions in the pathway glycan metabolism; L-arabinan degradation. Involved in the degradation of arabinan and is a key enzyme in the complete degradation of the plant cell wall. Catalyzes only the cleavage of terminal alpha-(1-&gt;5) arabinofuranosyl bonds of arabinan present in the arabinofuranosyl polysaccharides or oligosaccharides. It cannot act on other arabinose-containing polysaccharides and arabinoxylo-oligosaccharides. The sequence is that of Extracellular exo-alpha-(1-&gt;5)-L-arabinofuranosidase from Streptomyces avermitilis (strain ATCC 31267 / DSM 46492 / JCM 5070 / NBRC 14893 / NCIMB 12804 / NRRL 8165 / MA-4680).